The following is a 161-amino-acid chain: Troponin C, slow skeletal and cardiac muscles (161 aa).

M1 carries the post-translational modification N-acetylmethionine. 4 EF-hand domains span residues 16 to 51 (QKNEFKAAFDIFVLGAEDGCISTKELGKVMRMLGQN), 52 to 87 (PTPEELQEMIDEVDEDGSGTVDFDEFLVMMVRCMKD), 92 to 127 (KSEEELSDLFRMFDKNADGYIDLDELKMMLQATGET), and 128 to 161 (ITEDDIEELMKDGDKNNDGRIDYDEFLEFMKGVE). Residues D65, D67, S69, T71, and E76 each coordinate Ca(2+). S98 carries the post-translational modification Phosphoserine. The Ca(2+) site is built by D105, N107, D109, Y111, E116, D141, N143, D145, R147, and E152.

The protein belongs to the troponin C family.

In terms of biological role, troponin is the central regulatory protein of striated muscle contraction. Tn consists of three components: Tn-I which is the inhibitor of actomyosin ATPase, Tn-T which contains the binding site for tropomyosin and Tn-C. The binding of calcium to Tn-C abolishes the inhibitory action of Tn on actin filaments. The sequence is that of Troponin C, slow skeletal and cardiac muscles (Tnnc1) from Mus musculus (Mouse).